A 330-amino-acid chain; its full sequence is MYFLNDLNFSRRDAGFKARKDALDIASDYENISVVNIPLWGGVVQRIISSVKLSTFLCGLENKDVLIFNFPMAKPFWHILSFFHRLLKFRIVPLIHDIDELRGGGGSDSVRLATCDMVISHNPQMTKYLSKYMSQDKIKDIKIFDYLVSSDVEHRDVTDKQRGVIYAGNLSRHKCSFIYTEGCDFTLFGVNYENKDNPKYLGSFDAQSPEKINLPGMQFGLIWDGDSVETCSGAFGDYLKFNNPHKTSLYLSMELPVFIWDKAALADFIVDNRIGYAVGSIKEMQEIVDSMTIETYKQISENTKIISQKIRTGSYFRDVLEEVIDDLKTR.

The protein resides in the cytoplasm. The protein operates within bacterial outer membrane biogenesis; lipopolysaccharide biosynthesis. Its function is as follows. Involved in the transfer of galactofuranose (Galf) onto an alpha-D-gluco-configured acceptor substrate to form a beta-1,6-linkage. It uses n-octyl alpha-D-glucopyranoside as an acceptor substrate for the addition of galactofuranose from the donor substrate UDP-galactofuranose. It is not able to use beta-D-glucopyranoside isomers. The sequence is that of Beta-1,6-galactofuranosyltransferase WbbI (wbbI) from Escherichia coli (strain K12).